The sequence spans 300 residues: MSNHSSSIPELSDNGIRYYQTYNESLSLWPVRCKSFYISTRFGQTHVIASGPEDAPPLVLLHGALFSSTMWYPNIADWSSKYRTYAVDIIGDKNKSIPENVSGTRTDYANWLLDVFDNLGIEKSHMIGLSLGGLHTMNFLLRMPERVKSAAILSPAETFLPFHHDFYKYALGLTASNGVETFLNWMMNDQNVLHPIFVKQFKAGVMWQDGSRNPNPNADGFPYVFTDEELRSARVPILLLLGEHEVIYDPHSALHRASSFVPDIEAEVIKNAGHVLSMEQPTYVNERVMRFFNAETGISR.

The Proton acceptor role is filled by histidine 274.

The protein belongs to the AB hydrolase superfamily. Monomer.

The catalysed reaction is a carboxylic ester + H2O = an alcohol + a carboxylate + H(+). This is an uncharacterized protein from Bacillus subtilis (strain 168).